Consider the following 147-residue polypeptide: Small ribosomal subunit protein uS12 (147 aa).

It belongs to the universal ribosomal protein uS12 family. Part of the 30S ribosomal subunit.

With S4 and S5 plays an important role in translational accuracy. Located at the interface of the 30S and 50S subunits. The polypeptide is Small ribosomal subunit protein uS12 (Pyrobaculum islandicum (strain DSM 4184 / JCM 9189 / GEO3)).